We begin with the raw amino-acid sequence, 227 residues long: Probable cytokinin riboside 5'-monophosphate phosphoribohydrolase LOGL9 (227 aa).

The segment covering 1–15 has biased composition (polar residues); it reads MYISSPHTSHFTSID. The segment at 1 to 26 is disordered; that stretch reads MYISSPHTSHFTSIDRSPAVVSESDR. Substrate contacts are provided by residues E117, 135 to 136, and 152 to 158; these read RK and GYGTLEE.

This sequence belongs to the LOG family. As to expression, expressed in roots, leaves and stems.

The catalysed reaction is N(6)-(dimethylallyl)adenosine 5'-phosphate + H2O = N(6)-dimethylallyladenine + D-ribose 5-phosphate. It catalyses the reaction 9-ribosyl-trans-zeatin 5'-phosphate + H2O = trans-zeatin + D-ribose 5-phosphate. Its function is as follows. Cytokinin-activating enzyme working in the direct activation pathway. Phosphoribohydrolase that converts inactive cytokinin nucleotides to the biologically active free-base forms. The protein is Probable cytokinin riboside 5'-monophosphate phosphoribohydrolase LOGL9 (LOGL9) of Oryza sativa subsp. japonica (Rice).